Reading from the N-terminus, the 227-residue chain is E3 ubiquitin-protein ligase ZNRF1 (227 aa).

Residues 1-38 (MGGKQSTAARSRGPFPGVSTDDSAVPPPGGAPHFGHYR) are disordered. G2 carries the N-myristoyl glycine lipid modification. A required for endosomal and lysosomal localization and myristoylation region spans residues 2–10 (GGKQSTAAR). Phosphoserine is present on residues S50, S52, and S53. The tract at residues 77 to 105 (RGAGDAERAPGSGGSASDSTYAHGNGYQE) is disordered. Y103 is modified (phosphotyrosine). Position 123 is a phosphoserine (S123). The RING-type; atypical zinc finger occupies 184-225 (CVICLEELLQGDTIARLPCLCIYHKSCIDSWFEVNRSCPEHP).

As to quaternary structure, interacts with AKT1, GLUL and TUBB2A. Interacts with ZNRF2. Interacts (via its RING domain) with UBE2N. Interacts (when phosphorylated) with YWHAE. N-myristoylation targets ZNRF1 to intracellular membranes. Post-translationally, phosphorylated by SRC at Tyr-103; leading to 'Lys-63'-linked ubiquitination of TLR3, lysosomal trafficking and degradation.

The protein localises to the endosome. It localises to the lysosome. The protein resides in the membrane. It is found in the cytoplasmic vesicle. Its subcellular location is the secretory vesicle. The protein localises to the synaptic vesicle membrane. The catalysed reaction is S-ubiquitinyl-[E2 ubiquitin-conjugating enzyme]-L-cysteine + [acceptor protein]-L-lysine = [E2 ubiquitin-conjugating enzyme]-L-cysteine + N(6)-ubiquitinyl-[acceptor protein]-L-lysine.. It functions in the pathway protein modification; protein ubiquitination. Its function is as follows. E3 ubiquitin-protein ligase that plays a role in different processes including cell differentiation, receptor recycling or regulation of inflammation. Mediates the ubiquitination of AKT1 and GLUL, thereby playing a role in neuron cells differentiation. Plays a role in the establishment and maintenance of neuronal transmission and plasticity. Regulates Schwann cells differentiation by mediating ubiquitination of GLUL. Promotes neurodegeneration by mediating 'Lys-48'-linked polyubiquitination and subsequent degradation of AKT1 in axons: degradation of AKT1 prevents AKT1-mediated phosphorylation of GSK3B, leading to GSK3B activation and phosphorylation of DPYSL2/CRMP2 followed by destabilization of microtubule assembly in axons. Ubiquitinates the Na(+)/K(+) ATPase alpha-1 subunit/ATP1A1 and thereby influences its endocytosis and/or degradation. Controls ligand-induced EGFR signaling via mediating receptor ubiquitination and recruitment of the ESCRT machinery. Acts as a negative feedback mechanism controlling TLR3 trafficking by mediating TLR3 'Lys-63'-linked polyubiquitination to reduce type I IFN production. Modulates inflammation by promoting caveolin-1/CAV1 ubiquitination and degradation to regulate TLR4-activated immune response. The polypeptide is E3 ubiquitin-protein ligase ZNRF1 (ZNRF1) (Bos taurus (Bovine)).